The sequence spans 278 residues: HTH-type transcriptional regulator HdfR (278 aa).

Positions 1–58 (MDTELLKTFLEVSRTRHFGRAAEALYLTQSAVSFRIRQLENQLGVNLFTRHRNNIRLT) constitute an HTH lysR-type domain. The segment at residues 18 to 37 (FGRAAEALYLTQSAVSFRIR) is a DNA-binding region (H-T-H motif).

This sequence belongs to the LysR transcriptional regulatory family.

In terms of biological role, negatively regulates the transcription of the flagellar master operon flhDC by binding to the upstream region of the operon. The chain is HTH-type transcriptional regulator HdfR from Salmonella newport (strain SL254).